The following is a 1369-amino-acid chain: Mediator of RNA polymerase II transcription subunit 23 (1369 aa).

Residues 1337–1369 form a disordered region; the sequence is TESAAPPPPPMNSGSPAPQPNQVPVSVPLTVTQ. A compositionally biased stretch (pro residues) spans 1341 to 1357; it reads APPPPPMNSGSPAPQPN.

It belongs to the Mediator complex subunit 23 family. In terms of assembly, component of the Mediator complex.

The protein localises to the nucleus. Functionally, component of the Mediator complex, a coactivator involved in the regulated transcription of nearly all RNA polymerase II-dependent genes. Mediator functions as a bridge to convey information from gene-specific regulatory proteins to the basal RNA polymerase II transcription machinery. Mediator is recruited to promoters by direct interactions with regulatory proteins and serves as a scaffold for the assembly of a functional preinitiation complex with RNA polymerase II and the general transcription factors. In Xenopus laevis (African clawed frog), this protein is Mediator of RNA polymerase II transcription subunit 23 (med23).